Consider the following 288-residue polypeptide: UPF0494 membrane protein C212.04c (288 aa).

4 consecutive transmembrane segments (helical) span residues Trp107–Ile127, Ile144–Tyr164, Pro174–Ile194, and Ile198–Ala218.

This sequence belongs to the UPF0494 family.

It localises to the cytoplasm. The protein localises to the endoplasmic reticulum. It is found in the membrane. The sequence is that of UPF0494 membrane protein C212.04c from Schizosaccharomyces pombe (strain 972 / ATCC 24843) (Fission yeast).